Here is a 100-residue protein sequence, read N- to C-terminus: Urease subunit gamma (100 aa).

Belongs to the urease gamma subunit family. As to quaternary structure, heterotrimer of UreA (gamma), UreB (beta) and UreC (alpha) subunits. Three heterotrimers associate to form the active enzyme.

The protein resides in the cytoplasm. It catalyses the reaction urea + 2 H2O + H(+) = hydrogencarbonate + 2 NH4(+). Its pathway is nitrogen metabolism; urea degradation; CO(2) and NH(3) from urea (urease route): step 1/1. This chain is Urease subunit gamma, found in Ruegeria pomeroyi (strain ATCC 700808 / DSM 15171 / DSS-3) (Silicibacter pomeroyi).